A 491-amino-acid polypeptide reads, in one-letter code: Serine/threonine-protein kinase 3/4 (491 aa).

The disordered stretch occupies residues 1-24; it reads MEEVQRRQHPHPRRSLKKLSEDSL. The span at 7 to 17 shows a compositional bias: basic residues; the sequence is RQHPHPRRSLK. The Protein kinase domain maps to 32 to 283; the sequence is FDVLEKLGEG…ATQLLQHPFI (252 aa). Residues 38–46 and lysine 61 each bind ATP; that span reads LGEGSYGSV. The Proton acceptor role is filled by aspartate 151. Residue threonine 185 is modified to Phosphothreonine; by autocatalysis. Residues 292 to 334 are a coiled coil; it reads LRDLITDMMEIKLKRQEEQQRDLDQDDEENSEEDDMDSGTMVR. Disordered stretches follow at residues 307–394 and 406–435; these read QEEQ…IQQS and EKEN…PQDG. Acidic residues predominate over residues 315–328; sequence DQDDEENSEEDDMD. Polar residues-rich tracts occupy residues 363 to 373 and 410 to 428; these read TLDSQMGTMVI and QANS…SSDN. Residues 437–484 form the SARAH domain; it reads FESLKSWSVEELQRRLASLDPTMEQEIEEIRQRYQAKRQPILDAIDAK. A coiled-coil region spans residues 442-475; sequence SWSVEELQRRLASLDPTMEQEIEEIRQRYQAKRQ.

The protein belongs to the protein kinase superfamily. STE Ser/Thr protein kinase family. STE20 subfamily. In terms of assembly, homodimer; mediated via the coiled-coil region. It depends on Mg(2+) as a cofactor. Post-translationally, proteolytically cleaved by caspase-3 during apoptosis at Asp-328 resulting in a 37 kDa form. Proteolytic cleavage results in kinase activation and nuclear translocation of the truncated form (MST1/N).

It is found in the cytoplasm. It localises to the nucleus. The enzyme catalyses L-seryl-[protein] + ATP = O-phospho-L-seryl-[protein] + ADP + H(+). It carries out the reaction L-threonyl-[protein] + ATP = O-phospho-L-threonyl-[protein] + ADP + H(+). Its activity is regulated as follows. Inhibited by the C-terminal non-catalytic region. Activated by caspase-cleavage. Full activation also requires homodimerization and autophosphorylation of Thr-185. Its function is as follows. Stress-activated, pro-apoptotic kinase which, following caspase-cleavage, enters the nucleus and induces chromatin condensation followed by internucleosomal DNA fragmentation. Key component of the Hippo signaling pathway which plays a pivotal role in organ size control and tumor suppression by restricting proliferation and promoting apoptosis. The core of this pathway is composed of a kinase cascade wherein stk3/mst2 and stk4/mst1, in complex with its regulatory protein sav1, phosphorylates and activates lats1/2 in complex with its regulatory protein mob1, which in turn phosphorylates and inactivates yap1 oncoprotein and wwtr1/taz. Phosphorylation of yap1 by lats2 inhibits its translocation into the nucleus to regulate cellular genes important for cell proliferation, cell death, and cell migration. Phosphorylates 'Ser-14' of histone H2B (H2BS14ph) during apoptosis. This Squalus acanthias (Spiny dogfish) protein is Serine/threonine-protein kinase 3/4 (STK4).